Reading from the N-terminus, the 147-residue chain is Small ribosomal subunit protein bS16 (147 aa).

The disordered stretch occupies residues 89 to 147 (AWTHGNNPKKAEPGKKAQERAKERADKAEAKAAAAAEAAAAPAEEAPAEAAPAEETSES). Over residues 97–118 (KKAEPGKKAQERAKERADKAEA) the composition is skewed to basic and acidic residues. A compositionally biased stretch (low complexity) spans 119–147 (KAAAAAEAAAAPAEEAPAEAAPAEETSES).

It belongs to the bacterial ribosomal protein bS16 family.

This chain is Small ribosomal subunit protein bS16, found in Hyphomonas neptunium (strain ATCC 15444).